The primary structure comprises 480 residues: MTVTKMSWRPQYRSSKFRNVYGKAANREHCFDGIPITKNVHDNHFCAVNARFLAIVTESAGGGSFLVIPLEQTGRIEPNYPKVCGHQGNVLDIKWNPFIDNIIASCSEDTSVRIWEIPDGGLKRNMTEALLELHGHSRRVGLVEWHPTTNNILFSAGYDYKVLIWNLDIGEPVKMIDCHTDVILCMSFNTDGSLLTTTCKDKKLRVIEPRSGRVLQEANCKNHRVNRVVFLGNMKRLLTTGVSRWNTRQIALWDQEDLSMPMIEEEIDGLSGLLFPFYDADTHMLYLAGKGDGNIRYYEISTEKPYLSYLMEFRSPAPQKGLGVMPKHGLDVSACEVFRFYKLVTLKGLIEPISMIVPRRSDSYQEDIYPMTPGTEPALTPDEWLGGINRDPVLMSLKEGYKKSSKVVFKAPIREKKSVVVNGIDLLENVPPRTENELLRMFFRQQDEIRRLKEELAQKDIRLRQLQLELKNLRNNPKNC.

5 WD repeats span residues 85–125, 135–177, 179–217, 220–263, and 265–308; these read GHQG…LKRN, GHSR…KMID, HTDV…VLQE, CKNH…MPMI, and EEID…PYLS. Residues 436 to 479 adopt a coiled-coil conformation; it reads NELLRMFFRQQDEIRRLKEELAQKDIRLRQLQLELKNLRNNPKN.

Belongs to the WD repeat coronin family. Binds to F-actin and to vinculin.

Its subcellular location is the cytoplasm. It is found in the cytoskeleton. May play a role in the reorganization of neuronal actin structure. This is Coronin-2B (Coro2b) from Mus musculus (Mouse).